Consider the following 336-residue polypeptide: Ornithine carbamoyltransferase, catabolic (336 aa).

Carbamoyl phosphate contacts are provided by residues Ser57–Thr60, Gln84, Arg108, and His135–Gln138. L-ornithine contacts are provided by residues Asn168, Asp232, and Ser236–Met237. Carbamoyl phosphate contacts are provided by residues Cys274–Leu275 and Arg321.

The protein belongs to the aspartate/ornithine carbamoyltransferase superfamily. OTCase family.

The protein localises to the cytoplasm. It carries out the reaction carbamoyl phosphate + L-ornithine = L-citrulline + phosphate + H(+). The protein operates within amino-acid degradation; L-arginine degradation via ADI pathway; carbamoyl phosphate from L-arginine: step 2/2. Functionally, reversibly catalyzes the transfer of the carbamoyl group from carbamoyl phosphate (CP) to the N(epsilon) atom of ornithine (ORN) to produce L-citrulline. In Burkholderia pseudomallei (strain K96243), this protein is Ornithine carbamoyltransferase, catabolic.